A 234-amino-acid chain; its full sequence is Melanoregulin (234 aa).

Residues 215–234 (MNQNISGGEDEDEDESEPDD) are disordered. Over residues 222-234 (GEDEDEDESEPDD) the composition is skewed to acidic residues.

This sequence belongs to the melanoregulin family.

It localises to the apical cell membrane. Its subcellular location is the melanosome membrane. It is found in the lysosome membrane. The protein resides in the cytoplasmic vesicle membrane. Functionally, probably functions as a cargo-recognition protein that couples cytoplasmic vesicles to the transport machinery. Contributes to retrograde melanosome transport from the cell periphery to the center. Overexpression causes accumulation of late endosomes and/or lysosomes at the microtubule organising center (MTOC) at the center of the cell. Probably binds cholesterol and requires the presence of cholesterol in membranes to function in microtubule-mediated retrograde organelle transport. Binds phosphatidylinositol 3-phosphate, phosphatidylinositol 4-phosphate, phosphatidylinositol 5-phosphate and phosphatidylinositol 3,5-bisphosphate. This chain is Melanoregulin (mreg), found in Danio rerio (Zebrafish).